The following is a 574-amino-acid chain: Sorting nexin-33 (574 aa).

The SH3 domain occupies Met-1 to Ser-61. The tract at residues Ala-68–Asp-119 is disordered. Phosphoserine is present on residues Ser-77 and Ser-92. Acidic residues predominate over residues Phe-109–Asp-119. The PX domain maps to Phe-230–Gln-340. Residues Leu-371–Leu-574 form the BAR domain.

The protein belongs to the sorting nexin family. Homodimer (via BAR domain). Interacts with ADAM15. Interacts with FASLG. Interacts (via SH3 domain) with DNM1 and DNM2. Interacts with WASL. Interacts with FCHSD1 (via the F-BAR domain). Phosphorylated. As to expression, detected in heart and pancreas.

It localises to the cytoplasm. The protein localises to the cytosol. It is found in the membrane. Its subcellular location is the cytoplasmic vesicle membrane. Its function is as follows. Plays a role in the reorganization of the cytoskeleton, endocytosis and cellular vesicle trafficking via its interactions with membranes, WASL, DNM1 and DNM2. Acts both during interphase and at the end of mitotic cell divisions. Required for efficient progress through mitosis and cytokinesis. Required for normal formation of the cleavage furrow at the end of mitosis. Modulates endocytosis of cell-surface proteins, such as APP and PRNP; this then modulates the secretion of APP and PRNP peptides. Promotes membrane tubulation (in vitro). May promote the formation of macropinosomes. In Homo sapiens (Human), this protein is Sorting nexin-33 (SNX33).